The sequence spans 881 residues: Alanine--tRNA ligase (881 aa).

Zn(2+) is bound by residues His565, His569, Cys672, and His676.

Belongs to the class-II aminoacyl-tRNA synthetase family. Requires Zn(2+) as cofactor.

Its subcellular location is the cytoplasm. It catalyses the reaction tRNA(Ala) + L-alanine + ATP = L-alanyl-tRNA(Ala) + AMP + diphosphate. Catalyzes the attachment of alanine to tRNA(Ala) in a two-step reaction: alanine is first activated by ATP to form Ala-AMP and then transferred to the acceptor end of tRNA(Ala). Also edits incorrectly charged Ser-tRNA(Ala) and Gly-tRNA(Ala) via its editing domain. This is Alanine--tRNA ligase from Novosphingobium aromaticivorans (strain ATCC 700278 / DSM 12444 / CCUG 56034 / CIP 105152 / NBRC 16084 / F199).